The chain runs to 163 residues: Nucleotide-binding protein Spro_1084 (163 aa).

Belongs to the YajQ family.

Its function is as follows. Nucleotide-binding protein. In Serratia proteamaculans (strain 568), this protein is Nucleotide-binding protein Spro_1084.